We begin with the raw amino-acid sequence, 419 residues long: Gamma-glutamyl phosphate reductase (419 aa).

The protein belongs to the gamma-glutamyl phosphate reductase family.

It is found in the cytoplasm. It catalyses the reaction L-glutamate 5-semialdehyde + phosphate + NADP(+) = L-glutamyl 5-phosphate + NADPH + H(+). Its pathway is amino-acid biosynthesis; L-proline biosynthesis; L-glutamate 5-semialdehyde from L-glutamate: step 2/2. Catalyzes the NADPH-dependent reduction of L-glutamate 5-phosphate into L-glutamate 5-semialdehyde and phosphate. The product spontaneously undergoes cyclization to form 1-pyrroline-5-carboxylate. The protein is Gamma-glutamyl phosphate reductase of Maridesulfovibrio salexigens (strain ATCC 14822 / DSM 2638 / NCIMB 8403 / VKM B-1763) (Desulfovibrio salexigens).